Reading from the N-terminus, the 214-residue chain is A-type ATP synthase subunit D (214 aa).

This sequence belongs to the V-ATPase D subunit family. As to quaternary structure, has multiple subunits with at least A(3), B(3), C, D, E, F, H, I and proteolipid K(x).

The protein localises to the cell membrane. Its function is as follows. Component of the A-type ATP synthase that produces ATP from ADP in the presence of a proton gradient across the membrane. The chain is A-type ATP synthase subunit D from Thermococcus kodakarensis (strain ATCC BAA-918 / JCM 12380 / KOD1) (Pyrococcus kodakaraensis (strain KOD1)).